The primary structure comprises 95 residues: Protein TusB (95 aa).

The protein belongs to the DsrH/TusB family. Heterohexamer, formed by a dimer of trimers. The hexameric TusBCD complex contains 2 copies each of TusB, TusC and TusD. The TusBCD complex interacts with TusE.

It is found in the cytoplasm. In terms of biological role, part of a sulfur-relay system required for 2-thiolation of 5-methylaminomethyl-2-thiouridine (mnm(5)s(2)U) at tRNA wobble positions. This chain is Protein TusB, found in Cronobacter sakazakii (strain ATCC BAA-894) (Enterobacter sakazakii).